The chain runs to 764 residues: 5-methyltetrahydropteroyltriglutamate--homocysteine methyltransferase (764 aa).

5-methyltetrahydropteroyltri-L-glutamate contacts are provided by residues Arg-16–Lys-19 and Lys-117. L-homocysteine-binding positions include Ile-442–Ser-444 and Glu-495. Residues Ile-442–Ser-444 and Glu-495 contribute to the L-methionine site. 5-methyltetrahydropteroyltri-L-glutamate is bound by residues Arg-526–Cys-527 and Trp-572. Residue Asp-610 coordinates L-homocysteine. Asp-610 contacts L-methionine. Residue Glu-616 coordinates 5-methyltetrahydropteroyltri-L-glutamate. Zn(2+) contacts are provided by His-652, Cys-654, and Glu-676. The active-site Proton donor is His-705. Position 737 (Cys-737) interacts with Zn(2+).

This sequence belongs to the vitamin-B12 independent methionine synthase family. Zn(2+) serves as cofactor.

It catalyses the reaction 5-methyltetrahydropteroyltri-L-glutamate + L-homocysteine = tetrahydropteroyltri-L-glutamate + L-methionine. Its pathway is amino-acid biosynthesis; L-methionine biosynthesis via de novo pathway; L-methionine from L-homocysteine (MetE route): step 1/1. Catalyzes the transfer of a methyl group from 5-methyltetrahydrofolate to homocysteine resulting in methionine formation. The chain is 5-methyltetrahydropteroyltriglutamate--homocysteine methyltransferase from Bordetella petrii (strain ATCC BAA-461 / DSM 12804 / CCUG 43448).